We begin with the raw amino-acid sequence, 794 residues long: MASPTLSPDSSSQEALSAPTCSPTSDSENLSPDELELLAKLEEQNRLLEADSKSMRSMNGSRRNSGSSLVSSSSASSNLSHLEEDTWILWGRIANEWEEWRRRKEKLLKELIRKGIPHHFRAIVWQLLCSATDMPVKNQYSELLKMSSPCEKLIRRDIARTYPEHEFFKGQDSLGQEVLFNVMKAYSLVDREVGYCQGSAFIVGLLLMQMPEEEAFCVFVRLMQEYRLRELFKPSMAELGLCIYQFEYMLQEQLPDLNTHFRSQSFHTSMYASSWFLTLFLTTFPLPVATRVFDIFMYEGLEIVFRVGLALLQVNQAELMQLDMEGMSQYFQRVIPHQFDSCPDKLVLKAYQVKYNPKKMKRLEKEYAAMKSKEMEEQIEIKRLRTENRLLKQRIETLEKGQVTRAQEAEENYVIKRELAVVRQQCSSAAEDLQKAQSTIRQLQEQQENPRLTEDFVSHLETELEQSRLRETETLGALREMQDKVLDMEKRNSSLPDENNVAQLQEELKALKVREGQAVASTRELKLQLQELSDTWQAHLARGGRWKESPRKLVVGELQDELMSVRLREAQALAEGRELRQRVVELETQDHIHRNLLNRVEAERAALQEKLQYLAAQNKGLQTQLSESRRKQAEAECKSKEEVMAVRLREADSMAAVAEMRQRIAELEIQREEGRIQGQLNHSDSSQYIRELKDQIEELKAEVRLLKGPPPFEDPLAFDGLSLARHLDEDSLPSSDEELLGVGVGAALQDALYPLSPRDARFFRRLERPAKDSEGSSDSDADELAAPYSQGLDN.

Residues 1 to 30 (MASPTLSPDSSSQEALSAPTCSPTSDSENL) are compositionally biased toward polar residues. Disordered regions lie at residues 1 to 36 (MASP…DELE) and 49 to 75 (EADS…SSSA). The span at 55-75 (MRSMNGSRRNSGSSLVSSSSA) shows a compositional bias: low complexity. Positions 115–300 (GIPHHFRAIV…RVFDIFMYEG (186 aa)) constitute a Rab-GAP TBC domain. Coiled-coil stretches lie at residues 358–449 (KKMK…QQEN) and 569–709 (EAQA…LKGP). Residue S685 is modified to Phosphoserine. Residues 766–794 (LERPAKDSEGSSDSDADELAAPYSQGLDN) are disordered.

As to quaternary structure, may interact with RAB10.

Functions as a GTPase-activating protein (GAP) with a broad specificity. The chain is EVI5-like protein (EVI5L) from Homo sapiens (Human).